The primary structure comprises 152 residues: Endoribonuclease YbeY (152 aa).

Zn(2+) contacts are provided by His113, His117, and His123.

The protein belongs to the endoribonuclease YbeY family. Requires Zn(2+) as cofactor.

The protein resides in the cytoplasm. Single strand-specific metallo-endoribonuclease involved in late-stage 70S ribosome quality control and in maturation of the 3' terminus of the 16S rRNA. The chain is Endoribonuclease YbeY from Acidovorax sp. (strain JS42).